We begin with the raw amino-acid sequence, 158 residues long: UPF0262 protein RSKD131_1985 (158 aa).

The protein belongs to the UPF0262 family.

This Cereibacter sphaeroides (strain KD131 / KCTC 12085) (Rhodobacter sphaeroides) protein is UPF0262 protein RSKD131_1985.